The primary structure comprises 1099 residues: Carbamoyl phosphate synthase large chain (1099 aa).

The interval 1-402 (MPRREDIKRI…ALGKALRSLE (402 aa)) is carboxyphosphate synthetic domain. Positions 129, 169, 175, 176, 208, 210, 215, 241, 242, 243, 285, and 299 each coordinate ATP. The ATP-grasp 1 domain occupies 133–328 (KKTMEEAGLE…IAKIAALLAV (196 aa)). 3 residues coordinate Mg(2+): Q285, E299, and N301. 3 residues coordinate Mn(2+): Q285, E299, and N301. The tract at residues 403–541 (LDAAPKLDLD…STYNGVENEA (139 aa)) is oligomerization domain. The interval 542-944 (IPTDKEKIMI…AFAKAEIAAG (403 aa)) is carbamoyl phosphate synthetic domain. The 192-residue stretch at 666–857 (AKLLKRIGLR…VAKIAAKIMV (192 aa)) folds into the ATP-grasp 2 domain. ATP-binding residues include R702, K741, L743, E748, G773, V774, H775, S776, Q816, and E828. Mg(2+) contacts are provided by Q816, E828, and N830. Residues Q816, E828, and N830 each contribute to the Mn(2+) site. The 155-residue stretch at 945–1099 (NPLPTEGAIL…VRKLTDTWKM (155 aa)) folds into the MGS-like domain. Residues 945–1099 (NPLPTEGAIL…VRKLTDTWKM (155 aa)) form an allosteric domain region.

The protein belongs to the CarB family. Composed of two chains; the small (or glutamine) chain promotes the hydrolysis of glutamine to ammonia, which is used by the large (or ammonia) chain to synthesize carbamoyl phosphate. Tetramer of heterodimers (alpha,beta)4. It depends on Mg(2+) as a cofactor. Requires Mn(2+) as cofactor.

It carries out the reaction hydrogencarbonate + L-glutamine + 2 ATP + H2O = carbamoyl phosphate + L-glutamate + 2 ADP + phosphate + 2 H(+). The enzyme catalyses hydrogencarbonate + NH4(+) + 2 ATP = carbamoyl phosphate + 2 ADP + phosphate + 2 H(+). It participates in amino-acid biosynthesis; L-arginine biosynthesis; carbamoyl phosphate from bicarbonate: step 1/1. Its pathway is pyrimidine metabolism; UMP biosynthesis via de novo pathway; (S)-dihydroorotate from bicarbonate: step 1/3. Its function is as follows. Large subunit of the glutamine-dependent carbamoyl phosphate synthetase (CPSase). CPSase catalyzes the formation of carbamoyl phosphate from the ammonia moiety of glutamine, carbonate, and phosphate donated by ATP, constituting the first step of 2 biosynthetic pathways, one leading to arginine and/or urea and the other to pyrimidine nucleotides. The large subunit (synthetase) binds the substrates ammonia (free or transferred from glutamine from the small subunit), hydrogencarbonate and ATP and carries out an ATP-coupled ligase reaction, activating hydrogencarbonate by forming carboxy phosphate which reacts with ammonia to form carbamoyl phosphate. The chain is Carbamoyl phosphate synthase large chain from Thermotoga neapolitana (strain ATCC 49049 / DSM 4359 / NBRC 107923 / NS-E).